The following is a 234-amino-acid chain: Staphylococcal superantigen-like 5 (234 aa).

An N-terminal signal peptide occupies residues 1–30; the sequence is MKMTAIAKASLALGILATGTITSLHQTVNA.

Belongs to the staphylococcal/streptococcal toxin family. In terms of assembly, interacts with host SELPLG; this interaction prevents SELPLG-mediated neutrophil rolling. Interacts with host MMP9 (via sialic acid-containing O-glycans); this interaction inhibits MMP9 activity. Interacts with host GP1BA and GP6; these interactions play an important role in platelet binding and activation.

Functionally, secreted protein that plays a role in the inhibition of host innate immune system. Modulates the interaction between host SELPLG and P-selectin thereby preventing initial rolling of neutrophils toward the site of infection. Interferes with leukocyte trafficking by inhibiting host metalloproteinase-9/MMP9 activity. Also associates with two different platelet surface receptors GP1A and GP6 leading to platelet activation and aggregation. This Staphylococcus aureus (strain NCTC 8325 / PS 47) protein is Staphylococcal superantigen-like 5.